The chain runs to 531 residues: Fe-S cluster assembly factor HCF101, chloroplastic (531 aa).

The transit peptide at methionine 1–arginine 62 directs the protein to the chloroplast. Positions alanine 17–proline 27 are enriched in pro residues. A disordered region spans residues alanine 17–alanine 37. Low complexity predominate over residues threonine 28–alanine 37. Cysteine 181–serine 188 is a binding site for ATP.

The protein belongs to the Mrp/NBP35 ATP-binding proteins family. It depends on [4Fe-4S] cluster as a cofactor.

It is found in the plastid. The protein localises to the chloroplast stroma. Required for photosystem I (PSI) biosynthesis and assembly. May serve as a chloroplast scaffold protein that specifically assembles iron-sulfur (4Fe-4S) clusters and transfers them to the chloroplast PSI and ferredoxin-thioredoxin (FTR) complexes. Probably not required for assembly or stability of plastidic 2Fe-2S clusters. In Oryza sativa subsp. japonica (Rice), this protein is Fe-S cluster assembly factor HCF101, chloroplastic (HCF101).